A 609-amino-acid polypeptide reads, in one-letter code: NADH-ubiquinone oxidoreductase chain 5 (609 aa).

The next 15 helical transmembrane spans lie at 6–26, 35–55, 84–104, 116–138, 140–160, 171–191, 240–260, 272–292, 300–319, 330–350, 365–385, 409–429, 456–476, 481–501, and 581–601; these read SSIL…MTNL, YATS…LLFF, YFSI…MQFS, RFIK…NNLF, LFIG…WWYG, AILY…WFCL, TPVS…FLMI, IMTA…ICAL, IVAF…LGIN, THAF…HSLN, MPFT…MPFL, MITL…IYFV, LALG…PTNI, MPWH…AIAL, and GLIK…FILH.

It belongs to the complex I subunit 5 family. As to quaternary structure, core subunit of respiratory chain NADH dehydrogenase (Complex I) which is composed of 45 different subunits.

It localises to the mitochondrion inner membrane. The catalysed reaction is a ubiquinone + NADH + 5 H(+)(in) = a ubiquinol + NAD(+) + 4 H(+)(out). Functionally, core subunit of the mitochondrial membrane respiratory chain NADH dehydrogenase (Complex I) which catalyzes electron transfer from NADH through the respiratory chain, using ubiquinone as an electron acceptor. Essential for the catalytic activity and assembly of complex I. This Rattus norvegicus (Rat) protein is NADH-ubiquinone oxidoreductase chain 5.